The primary structure comprises 263 residues: Ribosomal RNA large subunit methyltransferase E (263 aa).

The disordered stretch occupies residues 1–34; it reads MSSAEGPKSGGGSKGSKSEASSRVRGSAPTGSRD. S-adenosyl-L-methionine contacts are provided by glycine 102, tryptophan 104, aspartate 126, aspartate 142, and aspartate 166. The active-site Proton acceptor is the lysine 206.

This sequence belongs to the class I-like SAM-binding methyltransferase superfamily. RNA methyltransferase RlmE family.

It localises to the cytoplasm. It carries out the reaction uridine(2552) in 23S rRNA + S-adenosyl-L-methionine = 2'-O-methyluridine(2552) in 23S rRNA + S-adenosyl-L-homocysteine + H(+). Its function is as follows. Specifically methylates the uridine in position 2552 of 23S rRNA at the 2'-O position of the ribose in the fully assembled 50S ribosomal subunit. This chain is Ribosomal RNA large subunit methyltransferase E, found in Rhodospirillum rubrum (strain ATCC 11170 / ATH 1.1.1 / DSM 467 / LMG 4362 / NCIMB 8255 / S1).